We begin with the raw amino-acid sequence, 287 residues long: Phosphatidylserine decarboxylase proenzyme (287 aa).

Active-site charge relay system; for autoendoproteolytic cleavage activity residues include Asp-90, His-147, and Ser-252. Ser-252 functions as the Schiff-base intermediate with substrate; via pyruvic acid; for decarboxylase activity in the catalytic mechanism. Ser-252 carries the pyruvic acid (Ser); by autocatalysis modification.

It belongs to the phosphatidylserine decarboxylase family. PSD-B subfamily. Prokaryotic type I sub-subfamily. As to quaternary structure, heterodimer of a large membrane-associated beta subunit and a small pyruvoyl-containing alpha subunit. Pyruvate is required as a cofactor. Is synthesized initially as an inactive proenzyme. Formation of the active enzyme involves a self-maturation process in which the active site pyruvoyl group is generated from an internal serine residue via an autocatalytic post-translational modification. Two non-identical subunits are generated from the proenzyme in this reaction, and the pyruvate is formed at the N-terminus of the alpha chain, which is derived from the carboxyl end of the proenzyme. The autoendoproteolytic cleavage occurs by a canonical serine protease mechanism, in which the side chain hydroxyl group of the serine supplies its oxygen atom to form the C-terminus of the beta chain, while the remainder of the serine residue undergoes an oxidative deamination to produce ammonia and the pyruvoyl prosthetic group on the alpha chain. During this reaction, the Ser that is part of the protease active site of the proenzyme becomes the pyruvoyl prosthetic group, which constitutes an essential element of the active site of the mature decarboxylase.

The protein localises to the cell membrane. It carries out the reaction a 1,2-diacyl-sn-glycero-3-phospho-L-serine + H(+) = a 1,2-diacyl-sn-glycero-3-phosphoethanolamine + CO2. It participates in phospholipid metabolism; phosphatidylethanolamine biosynthesis; phosphatidylethanolamine from CDP-diacylglycerol: step 2/2. Functionally, catalyzes the formation of phosphatidylethanolamine (PtdEtn) from phosphatidylserine (PtdSer). In Pseudomonas putida (strain GB-1), this protein is Phosphatidylserine decarboxylase proenzyme.